A 199-amino-acid chain; its full sequence is dTTP/UTP pyrophosphatase (199 aa).

Catalysis depends on aspartate 73, which acts as the Proton acceptor.

It belongs to the Maf family. YhdE subfamily. A divalent metal cation serves as cofactor.

It is found in the cytoplasm. The catalysed reaction is dTTP + H2O = dTMP + diphosphate + H(+). It catalyses the reaction UTP + H2O = UMP + diphosphate + H(+). Functionally, nucleoside triphosphate pyrophosphatase that hydrolyzes dTTP and UTP. May have a dual role in cell division arrest and in preventing the incorporation of modified nucleotides into cellular nucleic acids. This Caldicellulosiruptor saccharolyticus (strain ATCC 43494 / DSM 8903 / Tp8T 6331) protein is dTTP/UTP pyrophosphatase.